The sequence spans 122 residues: MIQRESRLVVADNSGAKEVLVINILGGSTGFYANIGDIVIVTVKKAISSGAIKAGDVLKAVIVRTKYGLRRKDGSYIKFDENAVVIIKDDLTPRGTRIFGSIARELREKKFTKIISLAQEVL.

It belongs to the universal ribosomal protein uL14 family. As to quaternary structure, part of the 50S ribosomal subunit. Forms a cluster with proteins L3 and L19. In the 70S ribosome, L14 and L19 interact and together make contacts with the 16S rRNA in bridges B5 and B8.

In terms of biological role, binds to 23S rRNA. Forms part of two intersubunit bridges in the 70S ribosome. This is Large ribosomal subunit protein uL14 from Phytoplasma mali (strain AT).